A 400-amino-acid chain; its full sequence is Imidazolonepropionase (400 aa).

2 residues coordinate Fe(3+): His-68 and His-70. Residues His-68 and His-70 each contribute to the Zn(2+) site. The 4-imidazolone-5-propanoate site is built by Arg-77, Tyr-140, and His-173. Tyr-140 is an N-formimidoyl-L-glutamate binding site. His-238 serves as a coordination point for Fe(3+). His-238 serves as a coordination point for Zn(2+). Residue Gln-241 coordinates 4-imidazolone-5-propanoate. Asp-313 lines the Fe(3+) pocket. A Zn(2+)-binding site is contributed by Asp-313. N-formimidoyl-L-glutamate is bound by residues Asn-315 and Gly-317. A 4-imidazolone-5-propanoate-binding site is contributed by Thr-318.

It belongs to the metallo-dependent hydrolases superfamily. HutI family. Zn(2+) serves as cofactor. The cofactor is Fe(3+).

Its subcellular location is the cytoplasm. The enzyme catalyses 4-imidazolone-5-propanoate + H2O = N-formimidoyl-L-glutamate. It participates in amino-acid degradation; L-histidine degradation into L-glutamate; N-formimidoyl-L-glutamate from L-histidine: step 3/3. Catalyzes the hydrolytic cleavage of the carbon-nitrogen bond in imidazolone-5-propanoate to yield N-formimidoyl-L-glutamate. It is the third step in the universal histidine degradation pathway. This Paracoccus denitrificans (strain Pd 1222) protein is Imidazolonepropionase.